A 212-amino-acid chain; its full sequence is Urease accessory protein UreG 2 (212 aa).

11 to 18 (GPVGSGKT) is a GTP binding site.

Belongs to the SIMIBI class G3E GTPase family. UreG subfamily. In terms of assembly, homodimer. UreD, UreF and UreG form a complex that acts as a GTP-hydrolysis-dependent molecular chaperone, activating the urease apoprotein by helping to assemble the nickel containing metallocenter of UreC. The UreE protein probably delivers the nickel.

It is found in the cytoplasm. In terms of biological role, facilitates the functional incorporation of the urease nickel metallocenter. This process requires GTP hydrolysis, probably effectuated by UreG. This Brucella abortus (strain 2308) protein is Urease accessory protein UreG 2.